A 752-amino-acid polypeptide reads, in one-letter code: DNA topoisomerase 4 subunit A (752 aa).

The Topo IIA-type catalytic domain maps to 31–494 (LPFIGDGLKP…EAKAMSEHDM (464 aa)). The active-site O-(5'-phospho-DNA)-tyrosine intermediate is the Tyr-120. Positions 472-492 (YGDDRRSPLREREEAKAMSEH) are disordered. Basic and acidic residues predominate over residues 473-492 (GDDRRSPLREREEAKAMSEH).

It belongs to the type II topoisomerase GyrA/ParC subunit family. ParC type 1 subfamily. Heterotetramer composed of ParC and ParE.

Its subcellular location is the cell membrane. It catalyses the reaction ATP-dependent breakage, passage and rejoining of double-stranded DNA.. In terms of biological role, topoisomerase IV is essential for chromosome segregation. It relaxes supercoiled DNA. Performs the decatenation events required during the replication of a circular DNA molecule. In Salmonella typhimurium (strain LT2 / SGSC1412 / ATCC 700720), this protein is DNA topoisomerase 4 subunit A.